The chain runs to 84 residues: Small ribosomal subunit protein bS16 (84 aa).

The protein belongs to the bacterial ribosomal protein bS16 family.

The polypeptide is Small ribosomal subunit protein bS16 (Methylococcus capsulatus (strain ATCC 33009 / NCIMB 11132 / Bath)).